A 361-amino-acid chain; its full sequence is Spermatogenesis-associated protein 17 (361 aa).

IQ domains follow at residues 32–61, 55–84, and 91–120; these read ENDA…IVTI, LNRI…VAYY, and YNAM…LKEY.

It is found in the cytoplasm. The sequence is that of Spermatogenesis-associated protein 17 (SPATA17) from Macaca fascicularis (Crab-eating macaque).